Consider the following 199-residue polypeptide: Rho-related protein racG (199 aa).

GTP is bound by residues Ala-13, Gly-15, Lys-16, Thr-17, Cys-18, Tyr-32, and Thr-35. Thr-17 is a binding site for Mg(2+). 2 short sequence motifs (switch) span residues 26–37 and 57–75; these read NAFPNEYIPTVF and DTAG…YPST. Thr-35 is a Mg(2+) binding site. Positions 116, 118, and 159 each coordinate GTP. A Cysteine methyl ester modification is found at Cys-196. A lipid anchor (S-geranylgeranyl cysteine) is attached at Cys-196. A propeptide spans 197 to 199 (removed in mature form); it reads SLF.

This sequence belongs to the small GTPase superfamily. Rho family. Mg(2+) serves as cofactor.

The protein localises to the cell membrane. The protein resides in the cytoplasm. It localises to the cytoskeleton. The enzyme catalyses GTP + H2O = GDP + phosphate + H(+). Regulated by guanine nucleotide exchange factors (GEFs) which promote the exchange of bound GDP for free GTP, GTPase activating proteins (GAPs) which increase the GTP hydrolysis activity, and GDP dissociation inhibitors which inhibit the dissociation of the nucleotide from the GTPase. Small GTPase which cycles between active GTP-bound and inactive GDP-bound states. Involved in actin cytoskeleton remodeling during capping of surface receptors and uroid formation. The sequence is that of Rho-related protein racG from Entamoeba histolytica (strain ATCC 30459 / HM-1:IMSS / ABRM).